Reading from the N-terminus, the 381-residue chain is Zinc finger CCCH domain-containing protein 61 (381 aa).

The interval 1 to 39 (MDVEHHKSGHISRPTVDIPPRKLLSSAKSPSSVSSPLRD) is disordered. Positions 21–37 (RKLLSSAKSPSSVSSPL) are enriched in low complexity. 2 C3H1-type zinc fingers span residues 101 to 128 (YTGE…HGVF) and 137 to 159 (YRTE…AHSP).

In terms of assembly, interacts with MARD1/FLZ9 and RD21A via its CCCH zing finger domains.

Its subcellular location is the cytoplasm. It localises to the stress granule. The protein resides in the P-body. In Arabidopsis thaliana (Mouse-ear cress), this protein is Zinc finger CCCH domain-containing protein 61.